The primary structure comprises 283 residues: MKQYLGLCQRIVDKGIWIENQRTGKRCLTVINADLEYDVGNNQFPMITTRKSFYKSAIAELIGYLRGYDNAADFRKLGTKTWDANSNLNNAWLNNPYRKGEDDMGRVYGIQGRSWAKPDGGFIDQLKKVVDDLSNGIDDRGEIVTFYNPGEFEMGCLRPCMHTHTFSLLGDTLHLTSYQRSCDVPLGLNFNQVQVFALLALMAQITGKKAGMAYHKIVNAHIYEDQLALMRDVQLPRLPFASPQLKINPKIKSLQDLETWVTMDDFEVEGYQCHDAIKYPFSV.

R22 contacts dUMP. C160 serves as the catalytic Nucleophile. DUMP-binding positions include 180-183 (RSCD), N191, and 221-223 (HIY). D183 contributes to the (6R)-5,10-methylene-5,6,7,8-tetrahydrofolate binding site. (6R)-5,10-methylene-5,6,7,8-tetrahydrofolate is bound at residue S282.

The protein belongs to the thymidylate synthase family. Bacterial-type ThyA subfamily. Homodimer.

The protein localises to the cytoplasm. The catalysed reaction is dUMP + (6R)-5,10-methylene-5,6,7,8-tetrahydrofolate = 7,8-dihydrofolate + dTMP. It participates in pyrimidine metabolism; dTTP biosynthesis. In terms of biological role, catalyzes the reductive methylation of 2'-deoxyuridine-5'-monophosphate (dUMP) to 2'-deoxythymidine-5'-monophosphate (dTMP) while utilizing 5,10-methylenetetrahydrofolate (mTHF) as the methyl donor and reductant in the reaction, yielding dihydrofolate (DHF) as a by-product. This enzymatic reaction provides an intracellular de novo source of dTMP, an essential precursor for DNA biosynthesis. In Psychromonas ingrahamii (strain DSM 17664 / CCUG 51855 / 37), this protein is Thymidylate synthase.